We begin with the raw amino-acid sequence, 986 residues long: MASNNVAQFAAELKMPAGVLLEQLQAAGVTKASEDDSLSETDKARLLDHLRKSHGSTDADKRKITLTKRHTSEIKQSDATGKARTIQVEVRKKRTFVRRDETSAENGDASNHVAEADVDDLELQRREEEARHEAELLEKQAQELKARQEQLEREEAERQAREAAAEAERRRAEEEAAKKRAAAEAAAREQAQAAKPAQAAQPAAAKAEPVAAKAAEPAVAKQSEQDDERAAAERAAQREAAKKAEDAARQAAEKARAEQEQIAKRRAAAEAEARAIREMMNTPRKAQVKAPEPAPKPAEPAKAAEAKGTLHKPARPAGEAPSRPAAKKPAAAAPAATTTPSAGDKKKPGGGKGGWQDDAAKRRGIKTRGDTSGGVDRGWRGGPKGRGKHQDQNTTFQAPTEPIVREVHVPETITVADLAHKMAVKASEVIKSMMKLGQMVTINQMLDQETAMIIVEELGHHAVAAKLDDPEAMLVEGEISDAESLPRPPVVTVMGHVDHGKTSLLDYIRRAKVAAGEAGGITQHIGAYHVETPRGVITFLDTPGHEAFTAMRARGAKATDIVILVVAADDGVMPQTKEAIAHAKAGGVPLVVAINKIDKPDANPDRVKQELVAEGVVPEEYGGDSPFVSVSAKTGAGIDDLLENVLLQAEVLELKAPVEAPAKGLVIEAKLDKGKGPVATILVQSGTLNRGDVVLAGSAYGRVRAMLDETGKPTKSAGPSIPVEIQGLSEVPQAGEEVIVMPDDRKAREVALFRQGKFRDVKLAKQQAAKLENMLEQMGEGEVAYMPLIVKADVQGSQEALVQSLLKLSTDEVRVQIVHGAVGGISESDVNLATASKAVIIGFNTRADAQARKLAEANGVDIRYYNIIYDAVDEVKAAMSGMLAPEKREIVTGTVEVRQVFKVPKIGAVAGCMVTDGFVKRSSSVRVLRNNVVIFTGELDSLKRFKDDVKEVRQGFECGMSIKNFNDIVEGDQFEVFEITEVARTL.

The interval 95–394 is disordered; it reads TFVRRDETSA…GRGKHQDQNT (300 aa). The span at 122–182 shows a compositional bias: basic and acidic residues; sequence ELQRREEEAR…EEEAAKKRAA (61 aa). Positions 183–222 are enriched in low complexity; sequence AEAAAREQAQAAKPAQAAQPAAAKAEPVAAKAAEPAVAKQ. Positions 228–277 are enriched in basic and acidic residues; the sequence is ERAAAERAAQREAAKKAEDAARQAAEKARAEQEQIAKRRAAAEAEARAIR. The span at 320-342 shows a compositional bias: low complexity; sequence APSRPAAKKPAAAAPAATTTPSA. Over residues 371-384 the composition is skewed to gly residues; sequence TSGGVDRGWRGGPK. Positions 486-655 constitute a tr-type G domain; it reads PRPPVVTVMG…LLQAEVLELK (170 aa). Positions 495 to 502 are G1; the sequence is GHVDHGKT. 495–502 provides a ligand contact to GTP; that stretch reads GHVDHGKT. Positions 520 to 524 are G2; it reads GITQH. The G3 stretch occupies residues 541–544; the sequence is DTPG. GTP-binding positions include 541–545 and 595–598; these read DTPGH and NKID. A G4 region spans residues 595–598; the sequence is NKID. The interval 631–633 is G5; the sequence is SAK.

This sequence belongs to the TRAFAC class translation factor GTPase superfamily. Classic translation factor GTPase family. IF-2 subfamily.

It localises to the cytoplasm. In terms of biological role, one of the essential components for the initiation of protein synthesis. Protects formylmethionyl-tRNA from spontaneous hydrolysis and promotes its binding to the 30S ribosomal subunits. Also involved in the hydrolysis of GTP during the formation of the 70S ribosomal complex. The protein is Translation initiation factor IF-2 of Paraburkholderia phytofirmans (strain DSM 17436 / LMG 22146 / PsJN) (Burkholderia phytofirmans).